A 280-amino-acid polypeptide reads, in one-letter code: 1-cyclohexenylcarbonyl-CoA reductase (280 aa).

Residues 22-25 (SRGI), 71-72 (DV), and N98 contribute to the NADP(+) site. Catalysis depends on proton acceptor residues Y158 and K165. NADP(+) is bound by residues K165 and 194–196 (IDS).

Belongs to the short-chain dehydrogenases/reductases (SDR) family. In terms of assembly, homodimer.

The enzyme catalyses (4R,5R)-4,5-dihydroxycyclohex-2-ene-1-carbonyl-CoA + NADP(+) = (3R,4R)-3,4-dihydroxycyclohexa-1,5-diene-1-carbonyl-CoA + NADPH + H(+). It catalyses the reaction (3S)-3-hydroxycyclohexane-1-carbonyl-CoA + NADP(+) = (5S)-5-hydroxycyclohex-1-ene-1-carbonyl-CoA + NADPH + H(+). The catalysed reaction is cyclohexane-1-carbonyl-CoA + NADP(+) = cyclohex-1-ene-1-carbonyl-CoA + NADPH + H(+). Its pathway is antibiotic biosynthesis. Its activity is regulated as follows. Inhibited by the thiol inhibitors p-chloromercuribenzoate, N-ethylmaleimide and iodoacetamide. Also inhibited by various divalent cations. Involved in the biosynthesis of the antifungal antibiotic ansatrienin A (mycotrienin I). Catalyzes three of the reductive steps involved in the formation of the cyclohexanecarboxylic acid (CHC) moiety of ansatrienin from shikimic acid. Can use 3,4-dihydroxycyclohexa-1,5-diene-1-carbonyl-CoA, 5-hydroxycyclohex-1-ene-1-carbonyl-CoA and cyclohex-1-ene-1-carbonyl-CoA as substrates. The chain is 1-cyclohexenylcarbonyl-CoA reductase from Streptomyces collinus.